We begin with the raw amino-acid sequence, 1265 residues long: Topoisomerase 1-associated factor 1 (1265 aa).

The segment covering 650-659 (DVNGNKNGQD) has biased composition (polar residues). 3 disordered regions span residues 650–670 (DVNGNKNGQDTTRDADEDAIS), 1019–1052 (GKQIPRGTAKKRSAIKPKSRKSQPTGIGGIDDDT), and 1167–1226 (HLSL…DPPS). The span at 1026–1039 (TAKKRSAIKPKSRK) shows a compositional bias: basic residues. 2 stretches are compositionally biased toward low complexity: residues 1171-1188 (SPNNENNSAHSSENLSSD) and 1201-1211 (SDSEYNSSNSS).

It belongs to the timeless family. As to quaternary structure, component of the fork protection complex (FPC) consisting of TOF1 and CSM3.

Its subcellular location is the nucleus. Functionally, forms a fork protection complex (FPC) with CSM3 and which is required for chromosome segregation during meiosis and DNA damage repair. FPC coordinates leading and lagging strand synthesis and moves with the replication fork. FPC stabilizes replication forks in a configuration that is recognized by replication checkpoint sensors. The protein is Topoisomerase 1-associated factor 1 (TOF1) of Eremothecium gossypii (strain ATCC 10895 / CBS 109.51 / FGSC 9923 / NRRL Y-1056) (Yeast).